We begin with the raw amino-acid sequence, 1430 residues long: 3'-5' RNA helicase YTHDC2 (1430 aa).

The tract at residues methionine 1 to lysine 37 is disordered. The segment covering proline 14 to alanine 33 has biased composition (gly residues). One can recognise an R3H domain in the interval aspartate 38–aspartate 106. A Helicase ATP-binding domain is found at valine 203–glutamine 369. Glycine 216–threonine 223 is a binding site for ATP. Positions aspartate 316–histidine 319 match the DEAH box motif. ANK repeat units lie at residues threonine 506–serine 538 and asparagine 539–leucine 571. A Helicase C-terminal domain is found at leucine 612–alanine 784. Phosphoserine is present on residues serine 1089, serine 1090, and serine 1092. Residues glutamate 1164–glycine 1174 are compositionally biased toward polar residues. The interval glutamate 1164–valine 1288 is disordered. Residues serine 1191–lysine 1200 show a composition bias toward low complexity. At serine 1202 the chain carries Phosphoserine. The span at lysine 1231 to aspartate 1249 shows a compositional bias: basic and acidic residues. Positions glutamine 1250–proline 1264 are enriched in low complexity. A phosphoserine mark is found at serine 1263, serine 1267, and serine 1281. In terms of domain architecture, YTH spans valine 1288–tryptophan 1418. Residues lysine 1294–serine 1296, tryptophan 1310, and tryptophan 1360 each bind RNA.

This sequence belongs to the DEAD box helicase family. DEAH subfamily. As to quaternary structure, interacts with MEIOC; binds transcripts that regulate the mitotic cell cycle inhibiting progression into metaphase, thereby allowing meiotic prophase to proceed normally. Interacts (via ANK repeats) with XRN1. Interacts with ZCCHC4. Associates with the small ribosomal subunit. Interacts with RBM46. Expressed in testis. Not detected in spermatogonia next to the tubule wall but is strongly expressed in spermatocytes, suggesting that it is up-regulated in germ cells upon entry into meiosis.

It is found in the cytoplasm. The protein resides in the perinuclear region. The enzyme catalyses ATP + H2O = ADP + phosphate + H(+). Its function is as follows. 3'-5' RNA helicase that plays a key role in the male and female germline by promoting transition from mitotic to meiotic divisions in stem cells. Specifically recognizes and binds N6-methyladenosine (m6A)-containing RNAs, a modification present at internal sites of mRNAs and some non-coding RNAs that plays a role in the efficiency of RNA processing and stability. Essential for ensuring a successful progression of the meiotic program in the germline by regulating the level of m6A-containing RNAs. Acts by binding and promoting degradation of m6A-containing mRNAs: the 3'-5' RNA helicase activity is required for this process and RNA degradation may be mediated by XRN1 exoribonuclease. Required for both spermatogenesis and oogenesis. The chain is 3'-5' RNA helicase YTHDC2 from Homo sapiens (Human).